The chain runs to 71 residues: Small ribosomal subunit protein bS21 (71 aa).

This sequence belongs to the bacterial ribosomal protein bS21 family.

The chain is Small ribosomal subunit protein bS21 from Acinetobacter baylyi (strain ATCC 33305 / BD413 / ADP1).